The primary structure comprises 190 residues: NADH dehydrogenase [ubiquinone] iron-sulfur protein 3 (190 aa).

This sequence belongs to the complex I 30 kDa subunit family. As to quaternary structure, complex I is composed of about 45 different subunits. This is a component of the iron-sulfur (IP) fragment of the enzyme.

The protein localises to the mitochondrion inner membrane. It catalyses the reaction a ubiquinone + NADH + 5 H(+)(in) = a ubiquinol + NAD(+) + 4 H(+)(out). Functionally, core subunit of the mitochondrial membrane respiratory chain NADH dehydrogenase (Complex I) that is believed to belong to the minimal assembly required for catalysis. Complex I functions in the transfer of electrons from NADH to the respiratory chain. The immediate electron acceptor for the enzyme is believed to be ubiquinone. This Oryza sativa subsp. japonica (Rice) protein is NADH dehydrogenase [ubiquinone] iron-sulfur protein 3 (NAD9).